Reading from the N-terminus, the 613-residue chain is Transcription factor cbf11 (613 aa).

The interval 32–58 is disordered; it reads NNGLHNQEDGAGGRNENSERVGSGSPG.

The protein belongs to the Su(H) family.

The protein localises to the cytoplasm. It is found in the nucleus. In terms of biological role, transcription factor that behaves as a negative regulator of adhesion. Recognizes specifically the canonical CSL response element GTGA/GGAA. May also play a cbf12-antagonistic role in the regulation of a number of other important processes such as extracellular material production, colony morphogenesis, ploidy maintenance, or meiosis. The chain is Transcription factor cbf11 (cbf11) from Schizosaccharomyces pombe (strain 972 / ATCC 24843) (Fission yeast).